Here is a 270-residue protein sequence, read N- to C-terminus: 2-epi-5-epi-valiolone 7-phosphate 2-epimerase (270 aa).

Residues Glu143 and Glu236 each act as proton donor/acceptor in the active site.

Belongs to the hyi family.

The catalysed reaction is 2-epi-5-epi-valiolone 7-phosphate = 5-epi-valiolone 7-phosphate. Functionally, involved in the biosynthesis of the alpha-glucosidase inhibitor acarbose. Catalyzes the 2-epimerisation of 2-epi-5-epivaliolone 7-phosphate to yield 5-epi-valiolone 7-phosphate. The sequence is that of 2-epi-5-epi-valiolone 7-phosphate 2-epimerase (acbO) from Actinoplanes sp. (strain ATCC 31044 / CBS 674.73 / SE50/110).